The primary structure comprises 386 residues: Cell division protein FtsZ (386 aa).

GTP is bound by residues 20-24 (GGGGN), 107-109 (GTG), Glu138, Arg142, and Asn186. The segment at 350 to 377 (LNQEQKTAAKAVNEQNAQGSKEPDYLDI) is disordered.

The protein belongs to the FtsZ family. As to quaternary structure, homodimer. Polymerizes to form a dynamic ring structure in a strictly GTP-dependent manner. Interacts directly with several other division proteins.

The protein localises to the cytoplasm. In terms of biological role, essential cell division protein that forms a contractile ring structure (Z ring) at the future cell division site. The regulation of the ring assembly controls the timing and the location of cell division. One of the functions of the FtsZ ring is to recruit other cell division proteins to the septum to produce a new cell wall between the dividing cells. Binds GTP and shows GTPase activity. This chain is Cell division protein FtsZ, found in Sodalis glossinidius.